Reading from the N-terminus, the 370-residue chain is Anhydro-N-acetylmuramic acid kinase (370 aa).

An ATP-binding site is contributed by 12–19 (GTSLDGVD).

This sequence belongs to the anhydro-N-acetylmuramic acid kinase family.

It carries out the reaction 1,6-anhydro-N-acetyl-beta-muramate + ATP + H2O = N-acetyl-D-muramate 6-phosphate + ADP + H(+). Its pathway is amino-sugar metabolism; 1,6-anhydro-N-acetylmuramate degradation. It participates in cell wall biogenesis; peptidoglycan recycling. Its function is as follows. Catalyzes the specific phosphorylation of 1,6-anhydro-N-acetylmuramic acid (anhMurNAc) with the simultaneous cleavage of the 1,6-anhydro ring, generating MurNAc-6-P. Is required for the utilization of anhMurNAc either imported from the medium or derived from its own cell wall murein, and thus plays a role in cell wall recycling. This is Anhydro-N-acetylmuramic acid kinase from Pectobacterium atrosepticum (strain SCRI 1043 / ATCC BAA-672) (Erwinia carotovora subsp. atroseptica).